The chain runs to 405 residues: Glucose-1-phosphate adenylyltransferase (405 aa).

Alpha-D-glucose 1-phosphate-binding positions include Y99, G164, 179–180 (EK), and S197.

The protein belongs to the bacterial/plant glucose-1-phosphate adenylyltransferase family. Homotetramer.

It carries out the reaction alpha-D-glucose 1-phosphate + ATP + H(+) = ADP-alpha-D-glucose + diphosphate. The protein operates within glycan biosynthesis; glycogen biosynthesis. Functionally, involved in the biosynthesis of ADP-glucose, a building block required for the elongation reactions to produce glycogen. Catalyzes the reaction between ATP and alpha-D-glucose 1-phosphate (G1P) to produce pyrophosphate and ADP-Glc. This is Glucose-1-phosphate adenylyltransferase from Corynebacterium aurimucosum (strain ATCC 700975 / DSM 44827 / CIP 107346 / CN-1) (Corynebacterium nigricans).